The primary structure comprises 414 residues: WW domain-containing oxidoreductase (414 aa).

Residues 1–23 are disordered; it reads MAALKYAGLEDTDSEEELPPGWE. The 34-residue stretch at 16–49 folds into the WW 1 domain; it reads EELPPGWEERTTKDGWVYYANHLEEKTQWEHPKS. The Nuclear localization signal motif lies at 50-55; that stretch reads GKRKRV. The WW 2 domain occupies 57–90; the sequence is GGLPYGWEQETDENGQVYFVDHINKRTTYLDPRL. 131-137 provides a ligand contact to NADP(+); it reads GANSGIG. Residue Ser-260 coordinates substrate. The active-site Proton acceptor is Tyr-293.

Belongs to the short-chain dehydrogenases/reductases (SDR) family.

The protein localises to the cytoplasm. It is found in the mitochondrion. Its subcellular location is the golgi apparatus. It localises to the lysosome. Putative oxidoreductase. Acts as a tumor suppressor and plays a role in apoptosis. May function synergistically with p53/TP53 to control genotoxic stress-induced cell death. Plays a role in TGFB1 signaling and TGFB1-mediated cell death. May also play a role in tumor necrosis factor (TNF)-mediated cell death. Required for normal bone development. Inhibits Wnt signaling. The sequence is that of WW domain-containing oxidoreductase (WWOX) from Gallus gallus (Chicken).